A 199-amino-acid polypeptide reads, in one-letter code: Peptidyl-tRNA hydrolase (199 aa).

Tyr15 contributes to the tRNA binding site. The active-site Proton acceptor is the His20. The tRNA site is built by Phe66, Asn68, and Asn114.

It belongs to the PTH family. In terms of assembly, monomer.

The protein resides in the cytoplasm. It carries out the reaction an N-acyl-L-alpha-aminoacyl-tRNA + H2O = an N-acyl-L-amino acid + a tRNA + H(+). Functionally, hydrolyzes ribosome-free peptidyl-tRNAs (with 1 or more amino acids incorporated), which drop off the ribosome during protein synthesis, or as a result of ribosome stalling. Catalyzes the release of premature peptidyl moieties from peptidyl-tRNA molecules trapped in stalled 50S ribosomal subunits, and thus maintains levels of free tRNAs and 50S ribosomes. In Cupriavidus pinatubonensis (strain JMP 134 / LMG 1197) (Cupriavidus necator (strain JMP 134)), this protein is Peptidyl-tRNA hydrolase.